Here is a 1084-residue protein sequence, read N- to C-terminus: Histone deacetylase 4 (1084 aa).

The stretch at arginine 67–glutamate 177 forms a coiled coil. Positions methionine 118–glutamate 313 are interaction with MEF2A. Over residues lysine 133–glutamate 163 the composition is skewed to basic and acidic residues. 3 disordered regions span residues lysine 133–valine 166, threonine 206–asparagine 226, and proline 240–glycine 315. Position 210 is a phosphoserine (serine 210). Phosphoserine; by CaMK4 and SIK1 is present on serine 246. Over residues lysine 259 to glycine 274 the composition is skewed to basic and acidic residues. A compositionally biased stretch (low complexity) spans serine 290–alanine 312. A PxLPxI/L motif; mediates interaction with ANKRA2 and 14-3-3 proteins motif is present at residues proline 349 to isoleucine 354. Serine 350 is modified (phosphoserine). The residue at position 467 (serine 467) is a Phosphoserine; by CaMK4 and SIK1. Disordered regions lie at residues proline 509–glutamate 531, lysine 548–glutamate 585, and proline 626–proline 646. A compositionally biased stretch (basic and acidic residues) spans arginine 516–glutamate 531. A Glycyl lysine isopeptide (Lys-Gly) (interchain with G-Cter in SUMO) cross-link involves residue lysine 559. Serine 565 is modified (phosphoserine). Positions arginine 629 to valine 641 are enriched in polar residues. Residue serine 632 is modified to Phosphoserine; by CaMK4. A Phosphoserine modification is found at serine 633. Residues glycine 655–leucine 1084 are histone deacetylase. Zn(2+) is bound by residues cysteine 667, cysteine 669, histidine 675, and cysteine 751. Residue histidine 803 is part of the active site. Positions glutamate 1051–leucine 1084 match the Nuclear export signal motif. The segment at serine 1061–leucine 1084 is disordered.

The protein belongs to the histone deacetylase family. HD type 2 subfamily. As to quaternary structure, homodimer. Homodimerization via its N-terminal domain. Interacts with MEF2A. Interacts with MEF2C and MEF2D. Interacts with AHRR. Interacts with NR2C1. Interacts with HDAC7. Interacts with a 14-3-3 chaperone proteins in a phosphorylation dependent manner. Interacts with 14-3-3 protein YWHAB. Interacts with BTBD14B. Interacts with KDM5B. Interacts with MYOCD. Interacts with MORC2. Interacts (via PxLPxI/L motif) with ANKRA2 (via ankyrin repeats). Interacts with CUL7 (as part of the 3M complex); negatively regulated by ANKRA2. Interacts with EP300 in the presence of TFAP2C. Interacts with HSPA1A and HSPA1B leading to their deacetylation at 'Lys-77'. Interacts with ZBTB7B; the interaction allows the recruitment of HDAC4 on CD8 loci for deacetylation and possible inhibition of CD8 genes expression. Interacts with DHX36. Interacts with SIK3; this interaction leads to HDAC4 retention in the cytoplasm. Interacts with ZNF638. Post-translationally, phosphorylated by CaMK4 at Ser-246, Ser-467 and Ser-632. Phosphorylation at other residues by CaMK2D is required for the interaction with 14-3-3. Phosphorylation at Ser-350, within the PxLPxI/L motif, impairs the binding of ANKRA2 but generates a high-affinity docking site for 14-3-3. Sumoylation on Lys-559 is promoted by the E3 SUMO-protein ligase RANBP2, and prevented by phosphorylation by CaMK4. In terms of tissue distribution, ubiquitous.

It is found in the nucleus. It localises to the cytoplasm. The catalysed reaction is N(6)-acetyl-L-lysyl-[histone] + H2O = L-lysyl-[histone] + acetate. Functionally, responsible for the deacetylation of lysine residues on the N-terminal part of the core histones (H2A, H2B, H3 and H4). Histone deacetylation gives a tag for epigenetic repression and plays an important role in transcriptional regulation, cell cycle progression and developmental events. Histone deacetylases act via the formation of large multiprotein complexes. Involved in muscle maturation via its interaction with the myocyte enhancer factors such as MEF2A, MEF2C and MEF2D. Involved in the MTA1-mediated epigenetic regulation of ESR1 expression in breast cancer. Deacetylates HSPA1A and HSPA1B at 'Lys-77' leading to their preferential binding to co-chaperone STUB1. The polypeptide is Histone deacetylase 4 (Homo sapiens (Human)).